The following is a 432-amino-acid chain: Glutamate--tRNA ligase 2 (432 aa).

Residues 6 to 16 (PSPTGDMHIGN) carry the 'HIGH' region motif. The 'KMSKS' region signature appears at 235–239 (KMSKR). Lys238 provides a ligand contact to ATP.

This sequence belongs to the class-I aminoacyl-tRNA synthetase family. Glutamate--tRNA ligase type 1 subfamily. As to quaternary structure, monomer.

It is found in the cytoplasm. It catalyses the reaction tRNA(Glu) + L-glutamate + ATP = L-glutamyl-tRNA(Glu) + AMP + diphosphate. In terms of biological role, catalyzes the attachment of glutamate to tRNA(Glu) in a two-step reaction: glutamate is first activated by ATP to form Glu-AMP and then transferred to the acceptor end of tRNA(Glu). The chain is Glutamate--tRNA ligase 2 from Sulfurimonas denitrificans (strain ATCC 33889 / DSM 1251) (Thiomicrospira denitrificans (strain ATCC 33889 / DSM 1251)).